The chain runs to 412 residues: Serine hydroxymethyltransferase (412 aa).

Residues Leu117 and 121 to 123 (GHL) contribute to the (6S)-5,6,7,8-tetrahydrofolate site. An N6-(pyridoxal phosphate)lysine modification is found at Lys226.

It belongs to the SHMT family. Homodimer. It depends on pyridoxal 5'-phosphate as a cofactor.

It is found in the cytoplasm. It catalyses the reaction (6R)-5,10-methylene-5,6,7,8-tetrahydrofolate + glycine + H2O = (6S)-5,6,7,8-tetrahydrofolate + L-serine. The protein operates within one-carbon metabolism; tetrahydrofolate interconversion. It participates in amino-acid biosynthesis; glycine biosynthesis; glycine from L-serine: step 1/1. Catalyzes the reversible interconversion of serine and glycine with tetrahydrofolate (THF) serving as the one-carbon carrier. This reaction serves as the major source of one-carbon groups required for the biosynthesis of purines, thymidylate, methionine, and other important biomolecules. Also exhibits THF-independent aldolase activity toward beta-hydroxyamino acids, producing glycine and aldehydes, via a retro-aldol mechanism. In Staphylococcus aureus (strain MW2), this protein is Serine hydroxymethyltransferase.